We begin with the raw amino-acid sequence, 264 residues long: S-adenosylmethionine decarboxylase proenzyme (264 aa).

S112 acts as the Schiff-base intermediate with substrate; via pyruvic acid in catalysis. S112 bears the Pyruvic acid (Ser); by autocatalysis mark. H117 functions as the Proton acceptor; for processing activity in the catalytic mechanism. The Proton donor; for catalytic activity role is filled by C140.

This sequence belongs to the prokaryotic AdoMetDC family. Type 2 subfamily. In terms of assembly, heterooctamer of four alpha and four beta chains arranged as a tetramer of alpha/beta heterodimers. Pyruvate is required as a cofactor. Is synthesized initially as an inactive proenzyme. Formation of the active enzyme involves a self-maturation process in which the active site pyruvoyl group is generated from an internal serine residue via an autocatalytic post-translational modification. Two non-identical subunits are generated from the proenzyme in this reaction, and the pyruvate is formed at the N-terminus of the alpha chain, which is derived from the carboxyl end of the proenzyme. The post-translation cleavage follows an unusual pathway, termed non-hydrolytic serinolysis, in which the side chain hydroxyl group of the serine supplies its oxygen atom to form the C-terminus of the beta chain, while the remainder of the serine residue undergoes an oxidative deamination to produce ammonia and the pyruvoyl group blocking the N-terminus of the alpha chain.

It catalyses the reaction S-adenosyl-L-methionine + H(+) = S-adenosyl 3-(methylsulfanyl)propylamine + CO2. The protein operates within amine and polyamine biosynthesis; S-adenosylmethioninamine biosynthesis; S-adenosylmethioninamine from S-adenosyl-L-methionine: step 1/1. In terms of biological role, catalyzes the decarboxylation of S-adenosylmethionine to S-adenosylmethioninamine (dcAdoMet), the propylamine donor required for the synthesis of the polyamines spermine and spermidine from the diamine putrescine. The protein is S-adenosylmethionine decarboxylase proenzyme of Salmonella arizonae (strain ATCC BAA-731 / CDC346-86 / RSK2980).